The primary structure comprises 160 residues: Large ribosomal subunit protein eL21 (160 aa).

2 stretches are compositionally biased toward basic and acidic residues: residues 112–123 (NDQKKKEAKEKG) and 136–145 (REAHFVRTNG). The tract at residues 112–145 (NDQKKKEAKEKGTWVQLKRQPAPPREAHFVRTNG) is disordered.

This sequence belongs to the eukaryotic ribosomal protein eL21 family. As to quaternary structure, component of the large ribosomal subunit.

It is found in the cytoplasm. Its subcellular location is the cytosol. It localises to the endoplasmic reticulum. Functionally, component of the large ribosomal subunit. The ribosome is a large ribonucleoprotein complex responsible for the synthesis of proteins in the cell. The chain is Large ribosomal subunit protein eL21 from Mus musculus (Mouse).